The sequence spans 366 residues: Probable dual-specificity RNA methyltransferase RlmN (366 aa).

The active-site Proton acceptor is the glutamate 108. The Radical SAM core domain maps to 114–352 (YSDRSTLCIS…CTVRDTKGQE (239 aa)). Cysteine 121 and cysteine 357 form a disulfide bridge. Residues cysteine 128, cysteine 132, and cysteine 135 each coordinate [4Fe-4S] cluster. S-adenosyl-L-methionine contacts are provided by residues 178 to 179 (GE), serine 212, 235 to 237 (SLH), and asparagine 314. Residue cysteine 357 is the S-methylcysteine intermediate of the active site.

This sequence belongs to the radical SAM superfamily. RlmN family. It depends on [4Fe-4S] cluster as a cofactor.

It localises to the cytoplasm. The catalysed reaction is adenosine(2503) in 23S rRNA + 2 reduced [2Fe-2S]-[ferredoxin] + 2 S-adenosyl-L-methionine = 2-methyladenosine(2503) in 23S rRNA + 5'-deoxyadenosine + L-methionine + 2 oxidized [2Fe-2S]-[ferredoxin] + S-adenosyl-L-homocysteine. It carries out the reaction adenosine(37) in tRNA + 2 reduced [2Fe-2S]-[ferredoxin] + 2 S-adenosyl-L-methionine = 2-methyladenosine(37) in tRNA + 5'-deoxyadenosine + L-methionine + 2 oxidized [2Fe-2S]-[ferredoxin] + S-adenosyl-L-homocysteine. In terms of biological role, specifically methylates position 2 of adenine 2503 in 23S rRNA and position 2 of adenine 37 in tRNAs. In Corynebacterium glutamicum (strain ATCC 13032 / DSM 20300 / JCM 1318 / BCRC 11384 / CCUG 27702 / LMG 3730 / NBRC 12168 / NCIMB 10025 / NRRL B-2784 / 534), this protein is Probable dual-specificity RNA methyltransferase RlmN.